Here is a 414-residue protein sequence, read N- to C-terminus: Tryptophan synthase beta chain (414 aa).

A compositionally biased stretch (basic and acidic residues) spans 1-26 (MVSTFSRKDQNYKNDDLNQPSKEGRF). The disordered stretch occupies residues 1–27 (MVSTFSRKDQNYKNDDLNQPSKEGRFG). Lys-109 is modified (N6-(pyridoxal phosphate)lysine).

It belongs to the TrpB family. Tetramer of two alpha and two beta chains. It depends on pyridoxal 5'-phosphate as a cofactor.

It carries out the reaction (1S,2R)-1-C-(indol-3-yl)glycerol 3-phosphate + L-serine = D-glyceraldehyde 3-phosphate + L-tryptophan + H2O. The protein operates within amino-acid biosynthesis; L-tryptophan biosynthesis; L-tryptophan from chorismate: step 5/5. The beta subunit is responsible for the synthesis of L-tryptophan from indole and L-serine. The polypeptide is Tryptophan synthase beta chain (Prochlorococcus marinus (strain MIT 9301)).